Here is a 516-residue protein sequence, read N- to C-terminus: DNA topoisomerase large subunit (516 aa).

Residue 128–136 (VTGGMNGVG) participates in ATP binding. The DNA-binding element occupies 369 to 400 (AALARKLAAEKAAETKAAKKASKAKVHKHIKA).

The protein belongs to the type II topoisomerase family. As to quaternary structure, part of the DNA topoisomerase complex made of gp39, gp52 and gp60. Requires Mg(2+) as cofactor.

It carries out the reaction ATP-dependent breakage, passage and rejoining of double-stranded DNA.. Its function is as follows. Large subunit of the DNA topoisomerase that untwists superhelical DNA. Controls of topological states of double-stranded DNA by transient breakage and subsequent rejoining of DNA strands. The protein is DNA topoisomerase large subunit (39) of Escherichia coli (Bacteriophage T4).